The sequence spans 330 residues: Ketol-acid reductoisomerase (NADP(+)) (330 aa).

In terms of domain architecture, KARI N-terminal Rossmann spans 1-181 (MNVYYEQDAD…GGTKAGVIET (181 aa)). NADP(+)-binding positions include 24–27 (YGSQ), R47, S50, S52, and 82–85 (DQNQ). Residue H107 is part of the active site. G133 is an NADP(+) binding site. Residues 182 to 327 (SIKNETETDL…AKLRDMMSWL (146 aa)) form the KARI C-terminal knotted domain. Residues D190, E194, E226, and E230 each coordinate Mg(2+). Substrate is bound at residue S251.

It belongs to the ketol-acid reductoisomerase family. The cofactor is Mg(2+).

The enzyme catalyses (2R)-2,3-dihydroxy-3-methylbutanoate + NADP(+) = (2S)-2-acetolactate + NADPH + H(+). It catalyses the reaction (2R,3R)-2,3-dihydroxy-3-methylpentanoate + NADP(+) = (S)-2-ethyl-2-hydroxy-3-oxobutanoate + NADPH + H(+). It functions in the pathway amino-acid biosynthesis; L-isoleucine biosynthesis; L-isoleucine from 2-oxobutanoate: step 2/4. It participates in amino-acid biosynthesis; L-valine biosynthesis; L-valine from pyruvate: step 2/4. Its function is as follows. Involved in the biosynthesis of branched-chain amino acids (BCAA). Catalyzes an alkyl-migration followed by a ketol-acid reduction of (S)-2-acetolactate (S2AL) to yield (R)-2,3-dihydroxy-isovalerate. In the isomerase reaction, S2AL is rearranged via a Mg-dependent methyl migration to produce 3-hydroxy-3-methyl-2-ketobutyrate (HMKB). In the reductase reaction, this 2-ketoacid undergoes a metal-dependent reduction by NADPH to yield (R)-2,3-dihydroxy-isovalerate. The chain is Ketol-acid reductoisomerase (NADP(+)) from Pelodictyon phaeoclathratiforme (strain DSM 5477 / BU-1).